The chain runs to 437 residues: Serine hydroxymethyltransferase 1 (437 aa).

(6S)-5,6,7,8-tetrahydrofolate contacts are provided by residues Leu132 and 136 to 138; that span reads GHL. Lys241 bears the N6-(pyridoxal phosphate)lysine mark.

This sequence belongs to the SHMT family. As to quaternary structure, homodimer. Pyridoxal 5'-phosphate is required as a cofactor.

It is found in the cytoplasm. The enzyme catalyses (6R)-5,10-methylene-5,6,7,8-tetrahydrofolate + glycine + H2O = (6S)-5,6,7,8-tetrahydrofolate + L-serine. Its pathway is one-carbon metabolism; tetrahydrofolate interconversion. It participates in amino-acid biosynthesis; glycine biosynthesis; glycine from L-serine: step 1/1. Catalyzes the reversible interconversion of serine and glycine with tetrahydrofolate (THF) serving as the one-carbon carrier. This reaction serves as the major source of one-carbon groups required for the biosynthesis of purines, thymidylate, methionine, and other important biomolecules. Also exhibits THF-independent aldolase activity toward beta-hydroxyamino acids, producing glycine and aldehydes, via a retro-aldol mechanism. This chain is Serine hydroxymethyltransferase 1, found in Mesorhizobium japonicum (strain LMG 29417 / CECT 9101 / MAFF 303099) (Mesorhizobium loti (strain MAFF 303099)).